Consider the following 149-residue polypeptide: Cyanate hydratase (149 aa).

Catalysis depends on residues R90, E93, and S116.

Belongs to the cyanase family.

The catalysed reaction is cyanate + hydrogencarbonate + 3 H(+) = NH4(+) + 2 CO2. Functionally, catalyzes the reaction of cyanate with bicarbonate to produce ammonia and carbon dioxide. The chain is Cyanate hydratase from Aquifex aeolicus (strain VF5).